Consider the following 1318-residue polypeptide: Ubiquitin carboxyl-terminal hydrolase 19 (1318 aa).

Residues 1–109 (MSGGASATGP…GACEDPHDLL (109 aa)) form a disordered region. Residues 1 to 1291 (MSGGASATGP…TTPDEGCLRY (1291 aa)) lie on the Cytoplasmic side of the membrane. Residues 28–44 (DRANQESKDGDPRKETG) are compositionally biased toward basic and acidic residues. A compositionally biased stretch (polar residues) spans 83-94 (PSSSGSASTPQE). Residues 95–107 (EQTKEGACEDPHD) are compositionally biased toward basic and acidic residues. One can recognise a CS 1 domain in the interval 113–202 (TPELLLDWRQ…VPMLTWPSLL (90 aa)). The tract at residues 234-255 (KAVPPGNDPVSPAMVRSRNPGK) is disordered. At S244 the chain carries Phosphoserine. The CS 2 domain occupies 282 to 384 (LAFVKNDSYE…RQSQRWGGLE (103 aa)). Residues 390–479 (VGGAKVAVPT…PMPHSPVSGD (90 aa)) are disordered. 2 stretches are compositionally biased toward basic and acidic residues: residues 420–436 (EEAR…RSED) and 447–457 (PMEHVTPKPET). Residues 497–1214 (TGLVNLGNTC…YAYVLFYRRR (718 aa)) form the USP domain. C506 functions as the Nucleophile in the catalytic mechanism. Residues C791, C794, C808, C811, C817, C821, H829, and C833 each coordinate Zn(2+). The MYND-type zinc finger occupies 791–833 (CAACQRKQQSEDEKLKRCTRCYRVGYCNQLCQKTHWPDHKGLC). Residue H1165 is the Proton acceptor of the active site. Basic and acidic residues predominate over residues 1218 to 1232 (VERPPRAGHSEHHPD). Residues 1218 to 1239 (VERPPRAGHSEHHPDLGPAAEA) are disordered. A helical membrane pass occupies residues 1292–1312 (FVLGTVAALVALVLNVFYPLV). At 1313–1318 (SQSRWR) the chain is on the lumenal side.

It belongs to the peptidase C19 family. As to quaternary structure, interacts with RNF123. Interacts with BIRC2/c-IAP1, BIRC3/c-IAP2 and XIAP/BIRC4. Interacts with HIF1A (via N-terminus). Interacts (via N-terminus) with HSP90AA1; this interaction activates the deubiquitinase activity of USP19.

It is found in the endoplasmic reticulum membrane. It catalyses the reaction Thiol-dependent hydrolysis of ester, thioester, amide, peptide and isopeptide bonds formed by the C-terminal Gly of ubiquitin (a 76-residue protein attached to proteins as an intracellular targeting signal).. Functionally, deubiquitinating enzyme that regulates the degradation of various proteins by removing ubiquitin moieties, thereby preventing their proteasomal degradation. Stabilizes RNF123, which promotes CDKN1B degradation and contributes to cell proliferation. Decreases the levels of ubiquitinated proteins during skeletal muscle formation and acts to repress myogenesis. Modulates transcription of major myofibrillar proteins. Also involved in turnover of endoplasmic-reticulum-associated degradation (ERAD) substrates. Mechanistically, deubiquitinates and thereby stabilizes several E3 ligases involved in the ERAD pathway including SYVN1 or MARCHF6. Regulates the stability of other E3 ligases including BIRC2/c-IAP1 and BIRC3/c-IAP2 by preventing their ubiquitination. Required for cells to mount an appropriate response to hypoxia by rescuing HIF1A from degradation in a non-catalytic manner and by mediating the deubiquitination of FUNDC1. Attenuates mitochondrial damage and ferroptosis by targeting and stabilizing NADPH oxidase 4/NOX4. Negatively regulates TNF-alpha- and IL-1beta-triggered NF-kappa-B activation by hydrolyzing 'Lys-27'- and 'Lys-63'-linked polyubiquitin chains from MAP3K7. Modulates also the protein level and aggregation of polyQ-expanded huntingtin/HTT through HSP90AA1. The chain is Ubiquitin carboxyl-terminal hydrolase 19 (USP19) from Homo sapiens (Human).